A 767-amino-acid chain; its full sequence is Acetylcholinesterase (767 aa).

The signal sequence occupies residues 1-19; the sequence is MAPLFLLLLLLLSPSPTSA. A disulfide bridge connects residues Cys94 and Cys121. Catalysis depends on Ser227, which acts as the Acyl-ester intermediate. A disulfide bridge links Cys281 with Cys292. Asn285 carries N-linked (GlcNAc...) asparagine glycosylation. The interval 401-504 is disordered; sequence KEGYGVEGDG…YGAKMPPRPH (104 aa). The active-site Charge relay system is Glu520. N-linked (GlcNAc...) asparagine glycosylation occurs at Asn536. A disulfide bond links Cys595 and Cys713. His633 serves as the catalytic Charge relay system. 2 N-linked (GlcNAc...) asparagine glycosylation sites follow: Asn650 and Asn725.

Belongs to the type-B carboxylesterase/lipase family. Oligomer composed of disulfide-linked homodimers.

It is found in the synapse. The protein localises to the secreted. The protein resides in the cell membrane. The enzyme catalyses acetylcholine + H2O = choline + acetate + H(+). Terminates signal transduction at the neuromuscular junction by rapid hydrolysis of the acetylcholine released into the synaptic cleft. The polypeptide is Acetylcholinesterase (ACHE) (Gallus gallus (Chicken)).